A 308-amino-acid chain; its full sequence is Polyprenal reductase (308 aa).

The Cytoplasmic segment spans residues 1–2; that stretch reads MT. The helical transmembrane segment at 3-23 threads the bilayer; it reads LLALVWLLLDATFLITLLWHL. Residues 24–65 are Lumenal-facing; that stretch reads LQGCKSGHSLLCSVFQDLIRYGKTKTGLQRPAWLQWFDIPKR. Residues 66 to 86 traverse the membrane as a helical segment; it reads CFWHFYCVSLIWNGCLLWILL. Over 87 to 120 the chain is Cytoplasmic; it reads RLLLQSVPVPEWLQLVLHFLHAGSEPQILDRELS. Residues 121–141 form a helical membrane-spanning segment; it reads VILALALLWLHSLRRLLECLF. Residues 142–148 lie on the Lumenal side of the membrane; the sequence is VSVFSNG. Residues 149 to 169 form a helical membrane-spanning segment; that stretch reads VIHLVQYCFGLGYYFLIGITV. Residues 170-184 lie on the Cytoplasmic side of the membrane; the sequence is LTYCPLDRRTVSTDN. The chain crosses the membrane as a helical span at residues 185 to 205; the sequence is LLTQCHWYHILGLALYIWASL. Topologically, residues 206 to 255 are lumenal; it reads HQYRCHCILAGLRKSASGNVINLNHSVPCGDWFERVSCPHYFAELLIYVS. A helical membrane pass occupies residues 256 to 276; that stretch reads IAVVFGLLNTIWWLVVLYVLL. At 277-308 the chain is on the cytoplasmic side; that stretch reads NQALAALLCHEFYHEKFDTYPIHRKAFIPFIF.

Belongs to the steroid 5-alpha reductase family. Polyprenal reductase subfamily.

It localises to the endoplasmic reticulum membrane. It catalyses the reaction a di-trans,poly-cis-dolichal + NADP(+) = a di-trans,poly-cis-polyprenal + NADPH + H(+). The enzyme catalyses a 3-oxo-5alpha-steroid + NADP(+) = a 3-oxo-Delta(4)-steroid + NADPH + H(+). The catalysed reaction is androst-4-ene-3,17-dione + NADPH + H(+) = 5alpha-androstan-3,17-dione + NADP(+). It carries out the reaction 17beta-hydroxy-5alpha-androstan-3-one + NADP(+) = testosterone + NADPH + H(+). It functions in the pathway protein modification; protein glycosylation. In terms of biological role, plays a key role in early steps of protein N-linked glycosylation by being involved in the conversion of polyprenol into dolichol. Acts as a polyprenal reductase that mediates the reduction of polyprenal into dolichal in a NADP-dependent mechanism. Dolichols are required for the synthesis of dolichol-linked monosaccharides and the oligosaccharide precursor used for N-glycosylation. Also able to convert testosterone (T) into 5-alpha-dihydrotestosterone (DHT). In Xenopus tropicalis (Western clawed frog), this protein is Polyprenal reductase (srd5a3).